The primary structure comprises 225 residues: Endo-1,4-beta-xylanase (225 aa).

The N-terminal stretch at 1–31 (MVGFTPVALAALAATGALAFPAGNATELEKR) is a signal peptide. Pyrrolidone carboxylic acid is present on glutamine 32. Residues 32 to 222 (QTTPNSEGWH…SSGYARITVA (191 aa)) form the GH11 domain. Glutamate 117 acts as the Nucleophile in catalysis. Cysteine 141 and cysteine 185 form a disulfide bridge. The active-site Proton donor is glutamate 209.

The enzyme catalyses Endohydrolysis of (1-&gt;4)-beta-D-xylosidic linkages in xylans.. Its pathway is glycan degradation; xylan degradation. The sequence is that of Endo-1,4-beta-xylanase (XYNA) from Thermomyces lanuginosus (Humicola lanuginosa).